The chain runs to 961 residues: MAAQRIRAANSSGLPRCKSEGTLIDLSEGFSETSFNDVKVPSPSALLVDNPTPFGNAKEVIAIKDYCPNNFTTLKFSKGDHLYVLDTSGGEWWYAHNTTEMGYIPSSYVQPLNYRNSTLSDSGMIDNLPDSPDEVAKELDLLGGWTDDQKQSGRPYSNNPFWNGVRTNPFLNGNAQPSMDELNPKSTVDLLLFDTGTSSFTESSSATTNSTGNIFDELPATNGIHLEQPVKRDNPFFRSKRSYSLSELSVLQAKSDAPPTSSFFTGLKSPAPEQFQSREDFRTAWLNHRKLARSCHDLDLLGQSPGWGQTQAVETNIVCKLDSSGGSVQLPDTSISIHVPEGHVAPGETQQISMKALLDPPLDLNSDRSTSISPVVEVKLSNLEVSTFIILEMKVSAEVKGDIFSKSTVVLQCLRSDSKEGPYAPIPLAYSYGDTIQVQLDNLEPCMYLAIVAQGSNILYPSTVWDFIHKRVTVGLYGPKHIHPSFKTVVTIFGHDCAPKTLLVTEVTRQAPSPAPVALQLWGKHQFILSRPQDLRVCMFSNMTNYDVKSNEQAKVVRGFQMKLGKVSRLIFSVISQNPNELSDFTLRVQVKDDQDTILTQFCVQTPQPPPKSAIKPSGQRRFLKKNEVGKIILSPFVVTTKYPTFQDRPVSSLKFGKLLKTVVRQNKSHYLLEYKKGDVVALLSEERIRLKGQLWTKEWYIGYYQGKVGLVHTKNVLVVGKARPSLFSGPELSTSVLLEQILRPCKFLTYIYASVRTLLMENISSWRAFADALGYGNLPLTFFCRAELDSEPERVASVLEKLKEDCNNPDNKDRKSFQKELVMALLKMDCQGLVVRLIQDFVLLTTAVEVAQRWRELAEKLAKVSKQQMDAYESPHRDRNGVVDSEAMWKPAYDFLLTWSHQIGDSYRDVIQELHIGLDKMKNPITRRWKHLTGTLILVNSLDILRAAAFSPADHDDFVI.

In terms of domain architecture, SH3 1 spans 55-114 (GNAKEVIAIKDYCPNNFTTLKFSKGDHLYVLDTSGGEWWYAHNTTEMGYIPSSYVQPLNY). 5 positions are modified to phosphoserine: Ser131, Ser244, Ser249, Ser277, and Ser294. The ZU5 domain maps to 315–452 (TNIVCKLDSS…LEPCMYLAIV (138 aa)). A Phosphoserine modification is found at Ser635. The 71-residue stretch at 652-722 (SSLKFGKLLK…HTKNVLVVGK (71 aa)) folds into the SH3 2 domain.

As to quaternary structure, homodimer or homooligomer. Interacts with DNM2, EPS15, clathrin, the adapter protein complex 2/AP-2 and TFRC. Interacts with the Rag GTPases RRAGA, RRAGB, RRAGC and RRAGD; the interaction is most probably direct, preferentially occurs with their inactive GDP-bound form and is negatively regulated by amino acids. In terms of processing, phosphorylated upon EGF stimulation. Phosphorylation prevents interaction with DNM2.

It localises to the membrane. The protein resides in the clathrin-coated pit. The protein localises to the cytoplasmic vesicle. It is found in the clathrin-coated vesicle. Its subcellular location is the nucleus. In terms of biological role, may function in transferrin receptor internalization at the plasma membrane through a cargo-specific control of clathrin-mediated endocytosis. Alternatively, may act as a negative regulator of the amino acid-induced TOR signaling by inhibiting the formation of active Rag GTPase complexes. Preferentially binds inactive Rag GTPase complexes and prevents their interaction with the mTORC1 complex inhibiting its relocalization to lysosomes and its activation. Thereby, may indirectly regulate cell growth, proliferation and autophagy. The chain is SH3 domain-binding protein 4 (Sh3bp4) from Rattus norvegicus (Rat).